Consider the following 861-residue polypeptide: Leucine--tRNA ligase (861 aa).

The 'HIGH' region motif lies at 42–52; that stretch reads PYPSGRLHMGH. The 'KMSKS' region motif lies at 619–623; it reads KMSKS. Lysine 622 contributes to the ATP binding site.

The protein belongs to the class-I aminoacyl-tRNA synthetase family.

It localises to the cytoplasm. It catalyses the reaction tRNA(Leu) + L-leucine + ATP = L-leucyl-tRNA(Leu) + AMP + diphosphate. The sequence is that of Leucine--tRNA ligase from Haemophilus ducreyi (strain 35000HP / ATCC 700724).